The sequence spans 201 residues: Snake venom metalloproteinase trimerelysin-2 (201 aa).

Residue glutamine 1 is modified to Pyrrolidone carboxylic acid. The 196-residue stretch at 6-201 folds into the Peptidase M12B domain; it reads RYIELAIVVD…YNPQCILNAP (196 aa). Residue asparagine 72 is glycosylated (N-linked (GlcNAc...) asparagine). Cystine bridges form between cysteine 117–cysteine 196, cysteine 158–cysteine 180, and cysteine 160–cysteine 163. Histidine 142 is a binding site for Zn(2+). The active site involves glutamate 143. The Zn(2+) site is built by histidine 146 and histidine 152.

The protein belongs to the venom metalloproteinase (M12B) family. P-I subfamily. As to quaternary structure, monomer. Zn(2+) is required as a cofactor. In terms of tissue distribution, expressed by the venom gland.

It is found in the secreted. It carries out the reaction Cleavage of 3-Asn-|-Gln-4, 10-His-|-Leu-11 and 14-Ala-|-Leu-15 in the insulin B chain, and the bond Z-Gly-Pro-|-Leu-Gly-Pro in a small molecule substrate of microbial collagenase.. Its function is as follows. Major venom non-hemorrhagic metalloproteinase. The sequence is that of Snake venom metalloproteinase trimerelysin-2 from Protobothrops flavoviridis (Habu).